A 233-amino-acid chain; its full sequence is uncharacterized protein (233 aa).

2 disordered regions span residues 1–159 (MGKH…NEKL) and 181–206 (MGVKNAPKPTDDSSRLSDEKNRQDKM). Positions 36-115 (RDRSRSPHKE…RRDDKNRLSA (80 aa)) are enriched in basic and acidic residues. The span at 135–148 (SSSSNTTDTASSSS) shows a compositional bias: low complexity. The segment covering 189–206 (PTDDSSRLSDEKNRQDKM) has biased composition (basic and acidic residues).

This is an uncharacterized protein from Caenorhabditis elegans.